Consider the following 351-residue polypeptide: L-threonine 3-dehydrogenase (351 aa).

Cysteine 39 is a binding site for Zn(2+). Catalysis depends on charge relay system residues threonine 41 and histidine 44. Zn(2+)-binding residues include histidine 64, glutamate 65, cysteine 94, cysteine 97, cysteine 100, and cysteine 108. NAD(+)-binding positions include isoleucine 176, aspartate 196, arginine 201, 271-273 (LGI), and 295-296 (IY).

This sequence belongs to the zinc-containing alcohol dehydrogenase family. In terms of assembly, homotetramer. Requires Zn(2+) as cofactor.

The protein localises to the cytoplasm. It catalyses the reaction L-threonine + NAD(+) = (2S)-2-amino-3-oxobutanoate + NADH + H(+). Its pathway is amino-acid degradation; L-threonine degradation via oxydo-reductase pathway; glycine from L-threonine: step 1/2. Functionally, catalyzes the NAD(+)-dependent oxidation of L-threonine to 2-amino-3-ketobutyrate. The polypeptide is L-threonine 3-dehydrogenase (Francisella tularensis subsp. tularensis (strain SCHU S4 / Schu 4)).